The chain runs to 166 residues: Lipoprotein signal peptidase (166 aa).

Helical transmembrane passes span 9–29, 37–57, 71–91, and 100–120; these read AGGSLAPWLGVAVIVILFDQL, VFAYGSSHAIAPFFNLVLVYN, WQRWAFTALGVAAAVLICYLL, and FCTALALIMGGAIGNVIDRLL. Residues Asp-126 and Asp-144 contribute to the active site. A helical transmembrane segment spans residues 136-156; that stretch reads HWPAFNLADSAITIGAALLVF.

The protein belongs to the peptidase A8 family.

It localises to the cell inner membrane. It catalyses the reaction Release of signal peptides from bacterial membrane prolipoproteins. Hydrolyzes -Xaa-Yaa-Zaa-|-(S,diacylglyceryl)Cys-, in which Xaa is hydrophobic (preferably Leu), and Yaa (Ala or Ser) and Zaa (Gly or Ala) have small, neutral side chains.. Its pathway is protein modification; lipoprotein biosynthesis (signal peptide cleavage). Functionally, this protein specifically catalyzes the removal of signal peptides from prolipoproteins. This is Lipoprotein signal peptidase from Paraburkholderia phymatum (strain DSM 17167 / CIP 108236 / LMG 21445 / STM815) (Burkholderia phymatum).